Consider the following 273-residue polypeptide: Ribosomal RNA small subunit methyltransferase A (273 aa).

S-adenosyl-L-methionine-binding residues include asparagine 18, leucine 20, glycine 45, glutamate 66, aspartate 91, and asparagine 113.

The protein belongs to the class I-like SAM-binding methyltransferase superfamily. rRNA adenine N(6)-methyltransferase family. RsmA subfamily.

The protein resides in the cytoplasm. It carries out the reaction adenosine(1518)/adenosine(1519) in 16S rRNA + 4 S-adenosyl-L-methionine = N(6)-dimethyladenosine(1518)/N(6)-dimethyladenosine(1519) in 16S rRNA + 4 S-adenosyl-L-homocysteine + 4 H(+). Its function is as follows. Specifically dimethylates two adjacent adenosines (A1518 and A1519) in the loop of a conserved hairpin near the 3'-end of 16S rRNA in the 30S particle. May play a critical role in biogenesis of 30S subunits. The polypeptide is Ribosomal RNA small subunit methyltransferase A (Cronobacter sakazakii (strain ATCC BAA-894) (Enterobacter sakazakii)).